The following is a 189-amino-acid chain: Elongation factor P (189 aa).

Lysine 34 is subject to N6-(3,6-diaminohexanoyl)-5-hydroxylysine.

This sequence belongs to the elongation factor P family. May be beta-lysylated on the epsilon-amino group of Lys-34 by the combined action of EpmA and EpmB, and then hydroxylated on the C5 position of the same residue by EpmC (if this protein is present). Lysylation is critical for the stimulatory effect of EF-P on peptide-bond formation. The lysylation moiety may extend toward the peptidyltransferase center and stabilize the terminal 3-CCA end of the tRNA. Hydroxylation of the C5 position on Lys-34 may allow additional potential stabilizing hydrogen-bond interactions with the P-tRNA.

Its subcellular location is the cytoplasm. It participates in protein biosynthesis; polypeptide chain elongation. Functionally, involved in peptide bond synthesis. Alleviates ribosome stalling that occurs when 3 or more consecutive Pro residues or the sequence PPG is present in a protein, possibly by augmenting the peptidyl transferase activity of the ribosome. Modification of Lys-34 is required for alleviation. The polypeptide is Elongation factor P (Buchnera aphidicola subsp. Acyrthosiphon pisum (strain APS) (Acyrthosiphon pisum symbiotic bacterium)).